We begin with the raw amino-acid sequence, 157 residues long: S-ribosylhomocysteine lyase (157 aa).

Fe cation contacts are provided by His-60, His-64, and Cys-127.

The protein belongs to the LuxS family. As to quaternary structure, homodimer. The cofactor is Fe cation.

It carries out the reaction S-(5-deoxy-D-ribos-5-yl)-L-homocysteine = (S)-4,5-dihydroxypentane-2,3-dione + L-homocysteine. Involved in the synthesis of autoinducer 2 (AI-2) which is secreted by bacteria and is used to communicate both the cell density and the metabolic potential of the environment. The regulation of gene expression in response to changes in cell density is called quorum sensing. Catalyzes the transformation of S-ribosylhomocysteine (RHC) to homocysteine (HC) and 4,5-dihydroxy-2,3-pentadione (DPD). The polypeptide is S-ribosylhomocysteine lyase (Helicobacter acinonychis (strain Sheeba)).